The primary structure comprises 360 residues: Phospho-N-acetylmuramoyl-pentapeptide-transferase (360 aa).

A run of 10 helical transmembrane segments spans residues 21–41, 73–93, 98–118, 132–152, 168–188, 199–219, 236–256, 263–283, 288–308, and 338–358; these read YITFRAIMALLTAMGIGLWIG, TMGGIMILIAIGVSTLLWADL, VWFVLFVLFGYGAVGFVDDYW, WKYFWLSVIALIAVFGIYAVG, FMPQLGIFFIILSYFVIVGTS, GLAIVPTIMVASAFALIAWAT, AGELVILCTAIVGAGLGFLWY, VFMGDVGSLSLGGALGTIAVL, LLLVIMGGVFVVEALSVILQV, and VIVCFWIITLMLVLIGLVTLK.

This sequence belongs to the glycosyltransferase 4 family. MraY subfamily. The cofactor is Mg(2+).

It localises to the cell inner membrane. It carries out the reaction UDP-N-acetyl-alpha-D-muramoyl-L-alanyl-gamma-D-glutamyl-meso-2,6-diaminopimeloyl-D-alanyl-D-alanine + di-trans,octa-cis-undecaprenyl phosphate = di-trans,octa-cis-undecaprenyl diphospho-N-acetyl-alpha-D-muramoyl-L-alanyl-D-glutamyl-meso-2,6-diaminopimeloyl-D-alanyl-D-alanine + UMP. It functions in the pathway cell wall biogenesis; peptidoglycan biosynthesis. In terms of biological role, catalyzes the initial step of the lipid cycle reactions in the biosynthesis of the cell wall peptidoglycan: transfers peptidoglycan precursor phospho-MurNAc-pentapeptide from UDP-MurNAc-pentapeptide onto the lipid carrier undecaprenyl phosphate, yielding undecaprenyl-pyrophosphoryl-MurNAc-pentapeptide, known as lipid I. The chain is Phospho-N-acetylmuramoyl-pentapeptide-transferase from Actinobacillus pleuropneumoniae serotype 7 (strain AP76).